The sequence spans 92 residues: Small integral membrane protein 12 (92 aa).

Residues 12 to 34 form a helical membrane-spanning segment; the sequence is YAPYVTFPVAFVVGAVGYHLEWF.

It belongs to the SMIM12 family.

It is found in the membrane. In Bos taurus (Bovine), this protein is Small integral membrane protein 12 (SMIM12).